We begin with the raw amino-acid sequence, 95 residues long: Cobalt transport protein CbiN (95 aa).

2 helical membrane passes run 5–25 (HILMLLAVIIISVAPLIIYSG) and 67–87 (LLFALQAAIGALIIGYVFGYY).

Belongs to the CbiN family. As to quaternary structure, forms an energy-coupling factor (ECF) transporter complex composed of an ATP-binding protein (A component, CbiO), a transmembrane protein (T component, CbiQ) and 2 possible substrate-capture proteins (S components, CbiM and CbiN) of unknown stoichimetry.

Its subcellular location is the cell membrane. Its pathway is cofactor biosynthesis; adenosylcobalamin biosynthesis. Part of the energy-coupling factor (ECF) transporter complex CbiMNOQ involved in cobalt import. This is Cobalt transport protein CbiN from Methanothermobacter thermautotrophicus (strain ATCC 29096 / DSM 1053 / JCM 10044 / NBRC 100330 / Delta H) (Methanobacterium thermoautotrophicum).